The chain runs to 302 residues: Actin maturation protease (302 aa).

The segment at 1 to 26 is disordered; it reads MPHTNEDPTAQQAGVILDPPPPLPPP. Residues 85-205 are peptidase C39-like; it reads SLIQEGPQCG…WAVISGVLFG (121 aa). Residue Cys93 is part of the active site.

This sequence belongs to the ACTMAP family.

Its subcellular location is the cytoplasm. The catalysed reaction is N-terminal N(alpha)-acetyl-L-methionyl-L-aspartyl-[protein] + H2O = N-terminal L-aspartyl-[protein] + N-acetyl-L-methionine. The enzyme catalyses N-terminal N(alpha)-acetyl-L-methionyl-L-glutamyl-[protein] + H2O = N-terminal L-glutamyl-[protein] + N-acetyl-L-methionine. It carries out the reaction N-terminal N(alpha)-acetyl-L-cysteinyl-L-aspartyl-[protein] + H2O = N-terminal L-aspartyl-[protein] + N-acetyl-L-cysteine. It catalyses the reaction N-terminal N(alpha)-acetyl-L-cysteinyl-L-glutamyl-[protein] + H2O = N-terminal L-glutamyl-[protein] + N-acetyl-L-cysteine. Functionally, actin maturation protease that specifically mediates the cleavage of immature acetylated N-terminal actin, thereby contributing to actin maturation. Cleaves N-terminal acetylated methionine of immature cytoplasmic beta- and gamma-actin after translation. Cleaves N-terminal acetylated cysteine of muscle alpha-actin after canonical removal of N-terminal methionine. The chain is Actin maturation protease from Xenopus tropicalis (Western clawed frog).